Consider the following 526-residue polypeptide: D-arabinono-1,4-lactone oxidase (526 aa).

Residues phenylalanine 22–alanine 196 form the FAD-binding PCMH-type domain. Histidine 59 is subject to Pros-8alpha-FAD histidine.

It belongs to the oxygen-dependent FAD-linked oxidoreductase family. FAD is required as a cofactor.

Its subcellular location is the mitochondrion membrane. The catalysed reaction is D-arabinono-1,4-lactone + O2 = dehydro-D-arabinono-1,4-lactone + H2O2 + H(+). It participates in cofactor biosynthesis; D-erythroascorbate biosynthesis; dehydro-D-arabinono-1,4-lactone from D-arabinose: step 2/2. This Yarrowia lipolytica (strain CLIB 122 / E 150) (Yeast) protein is D-arabinono-1,4-lactone oxidase (ALO1).